The following is a 179-amino-acid chain: Avenin-like a2 (179 aa).

An N-terminal signal peptide occupies residues M1–A19.

This sequence belongs to the prolamin family. Post-translationally, contains 7 disulfide bonds.

Functionally, seed storage protein. Not integrated in the gluten polymer through disulfide bonds, unless incorporated by reduction and reoxidation during dough making. Increases dough strength and bread volume, but decreases dough stability when added into a base wheat flour. This chain is Avenin-like a2, found in Triticum aestivum (Wheat).